The sequence spans 332 residues: MPAVKRKAAPTLGAKLQRRVRPRFEAEPDSDVEGSSDEAPSEEEGGGFHTGSDTEEEEEDEEIEEGSEPGSDDDSDAPSEHGGAGIDASQLSFGALARAQASLGALKKKKKKKGGDEDGSDDDEEKEEPNWKTEIEKGMKAKVEKHHRTNKHAPVETTSKKPVSRRRDFLANEPAKPKSRDPRFAPPGIGGSSGKSVVDEIKARKAYSFLDDYQEDEMKQLRMAIKKTKDANEKEELQRALLSMESKKKARARKDKERELLSEHKKKEKELIKQGKTPFYLKKSEQKKQLLVEQFASMKKSQVDKAIERKRKKIAGKEKKALPLARRTAEDR.

Disordered regions lie at residues 1 to 91 (MPAV…ASQL), 104 to 196 (GALK…SGKS), 243 to 262 (SMES…ELLS), and 312 to 332 (KKIA…AEDR). Acidic residues-rich tracts occupy residues 27–45 (EPDS…EEEG), 53–77 (DTEE…DSDA), and 117–127 (EDGSDDDEEKE). Basic and acidic residues-rich tracts occupy residues 128-142 (EPNW…MKAK) and 165-183 (RRRD…RDPR). Residues 212–274 (DYQEDEMKQL…KKKEKELIKQ (63 aa)) are a coiled coil. Residues 315–332 (AGKEKKALPLARRTAEDR) show a composition bias toward basic and acidic residues.

Belongs to the RRP36 family. Associates with 90S and pre-40S pre-ribosomal particles.

It localises to the nucleus. Its subcellular location is the nucleolus. Functionally, component of the 90S pre-ribosome involved in the maturation of rRNAs. Required for early cleavages of the pre-RNAs in the 40S ribosomal subunit maturation pathway. This chain is rRNA biogenesis protein rrp-36 (rrp-36), found in Neurospora crassa (strain ATCC 24698 / 74-OR23-1A / CBS 708.71 / DSM 1257 / FGSC 987).